The sequence spans 295 residues: Pyrroline-5-carboxylate reductase (295 aa).

It belongs to the pyrroline-5-carboxylate reductase family.

The protein resides in the cytoplasm. The enzyme catalyses L-proline + NADP(+) = (S)-1-pyrroline-5-carboxylate + NADPH + 2 H(+). The catalysed reaction is L-proline + NAD(+) = (S)-1-pyrroline-5-carboxylate + NADH + 2 H(+). It participates in amino-acid biosynthesis; L-proline biosynthesis; L-proline from L-glutamate 5-semialdehyde: step 1/1. Catalyzes the reduction of 1-pyrroline-5-carboxylate (PCA) to L-proline. The polypeptide is Pyrroline-5-carboxylate reductase (Mycobacterium tuberculosis (strain CDC 1551 / Oshkosh)).